The following is a 541-amino-acid chain: Major facilitator-type transporter ecdD (541 aa).

The helical transmembrane segment at 15–35 (AWPAILISGFVAFGGILFGYD) threads the bilayer. An N-linked (GlcNAc...) asparagine glycan is attached at asparagine 64. Helical transmembrane passes span 72–92 (AIVS…SPMG), 106–126 (GIFV…PFLA), 129–149 (FFAG…QSET), and 156–176 (GFIV…ASVL). N-linked (GlcNAc...) asparagine glycans are attached at residues asparagine 178 and asparagine 184. A helical transmembrane segment spans residues 191-211 (IPIAVQFAWSIILVGGMLILP). Asparagine 253 carries an N-linked (GlcNAc...) asparagine glycan. Helical transmembrane passes span 277-297 (LVTG…FIMY), 313-333 (VITL…LYAI), 340-360 (PVLL…AVLG), 384-404 (IAFI…SAWV), 418-440 (SLSM…TPYL), and 454-474 (IFFI…FMIY).

Belongs to the major facilitator superfamily. Sugar transporter (TC 2.A.1.1) family.

Its subcellular location is the membrane. The sequence is that of Major facilitator-type transporter ecdD from Aspergillus rugulosus (Emericella rugulosa).